The primary structure comprises 489 residues: NF-kappa-B inhibitor cactus (489 aa).

The span at 1–26 (MPSPTKAAEAATKATATSDCSCSAAS) shows a compositional bias: low complexity. Disordered regions lie at residues 1–138 (MPSP…SMRL) and 163–203 (NNLG…APPS). S45 carries the post-translational modification Phosphoserine; by PKC. A compositionally biased stretch (polar residues) spans 69–86 (NETSDSGFISGPQSSQIC). At S135 the chain carries Phosphoserine; by PKC. The segment covering 163 to 180 (NNLGQSSSTQITGRSKFQ) has biased composition (polar residues). A Phosphothreonine; by PKC modification is found at T174. The span at 181-203 (SSTASTANANPSGXGATSSAPPS) shows a compositional bias: low complexity. ANK repeat units lie at residues 220 to 252 (DGDTPXHLACISGSVEVVAALIRMAPHPCLLNI), 256 to 285 (VAQTPLHLAALTAQPNIMRILLLAGAEVRD), 287 to 316 (HGNTALHLSCIAGEKQCVRALTEEFGATEI), 350 to 379 (DGERCVHLAAEAGHIDILRILVSHGADINA), and 384 to 413 (SGRTPLHIAIEGCNEDLANFLLDECEKLNL). T308 carries the post-translational modification Phosphothreonine; by PKC. Position 384 is a phosphoserine; by PKC (S384).

The protein resides in the cytoplasm. Involved in the formation of the dorsoventral pattern. It inhibits nuclear translocation of the dorsal morphogen in the dorsal region of the embryo. The protein is NF-kappa-B inhibitor cactus (cact) of Drosophila yakuba (Fruit fly).